The chain runs to 335 residues: Cytoskeleton protein RodZ (335 aa).

Residues 1 to 111 (MNTEATHDQN…LGKRRKKRDG (111 aa)) are Cytoplasmic-facing. The HTH cro/C1-type domain occupies 19 to 71 (LRNAREQLGLSQQAVAERLCLKVSTVRDIEEDKAPADLASTFLRGYIRSYARL). The segment at residues 30–49 (QQAVAERLCLKVSTVRDIEE) is a DNA-binding region (H-T-H motif). A helical; Signal-anchor for type II membrane protein membrane pass occupies residues 112-132 (WLMTFTWLVLFVVIGLSGAWW). Topologically, residues 133–335 (WQDHKAQQEE…TLNAEQSPAQ (203 aa)) are periplasmic. A compositionally biased stretch (polar residues) spans 148-164 (DQSSAELNNNQSQSVPL). A disordered region spans residues 148 to 239 (DQSSAELNNN…PDGAAPLPTD (92 aa)). Composition is skewed to low complexity over residues 165 to 205 (DTST…DPQQ) and 217 to 239 (DTAA…LPTD).

Belongs to the RodZ family.

Its subcellular location is the cell inner membrane. Cytoskeletal protein that is involved in cell-shape control through regulation of the length of the long axis. The protein is Cytoskeleton protein RodZ of Escherichia coli O6:K15:H31 (strain 536 / UPEC).